The following is a 335-amino-acid chain: Probable cyclin-H (335 aa).

The protein belongs to the cyclin family. Cyclin C subfamily.

It is found in the nucleus. Functionally, regulates CDK7, the catalytic subunit of the CDK-activating kinase (CAK) enzymatic complex. The sequence is that of Probable cyclin-H (CYCH) from Echinococcus multilocularis (Fox tapeworm).